The following is a 148-amino-acid chain: Large ribosomal subunit protein bL9 (148 aa).

Belongs to the bacterial ribosomal protein bL9 family.

Functionally, binds to the 23S rRNA. The polypeptide is Large ribosomal subunit protein bL9 (Aliarcobacter butzleri (strain RM4018) (Arcobacter butzleri)).